A 294-amino-acid polypeptide reads, in one-letter code: Energy-coupling factor transporter ATP-binding protein EcfA1 (294 aa).

The ABC transporter domain maps to 27–260 (IEFENVYFAY…EERLLKMQLD (234 aa)). 60–67 (GHNGSGKS) is a binding site for ATP.

This sequence belongs to the ABC transporter superfamily. Energy-coupling factor EcfA family. In terms of assembly, forms a stable energy-coupling factor (ECF) transporter complex composed of 2 membrane-embedded substrate-binding proteins (S component), 2 ATP-binding proteins (A component) and 2 transmembrane proteins (T component).

The protein localises to the cell membrane. In terms of biological role, ATP-binding (A) component of a common energy-coupling factor (ECF) ABC-transporter complex. Unlike classic ABC transporters this ECF transporter provides the energy necessary to transport a number of different substrates. The sequence is that of Energy-coupling factor transporter ATP-binding protein EcfA1 from Ureaplasma parvum serovar 3 (strain ATCC 700970).